Here is a 317-residue protein sequence, read N- to C-terminus: Ribosomal RNA large subunit methyltransferase F (317 aa).

The protein belongs to the methyltransferase superfamily. METTL16/RlmF family.

The protein localises to the cytoplasm. It carries out the reaction adenosine(1618) in 23S rRNA + S-adenosyl-L-methionine = N(6)-methyladenosine(1618) in 23S rRNA + S-adenosyl-L-homocysteine + H(+). In terms of biological role, specifically methylates the adenine in position 1618 of 23S rRNA. This Pseudomonas putida (strain ATCC 47054 / DSM 6125 / CFBP 8728 / NCIMB 11950 / KT2440) protein is Ribosomal RNA large subunit methyltransferase F.